Reading from the N-terminus, the 77-residue chain is Translation initiation factor IF-1, chloroplastic (77 aa).

An S1-like domain is found at 1-71 (MKEQKWIHEG…TRGRIIYRLR (71 aa)).

The protein belongs to the IF-1 family. As to quaternary structure, component of the 30S ribosomal translation pre-initiation complex which assembles on the 30S ribosome in the order IF-2 and IF-3, IF-1 and N-formylmethionyl-tRNA(fMet); mRNA recruitment can occur at any time during PIC assembly.

The protein localises to the plastid. It is found in the chloroplast. Functionally, one of the essential components for the initiation of protein synthesis. Stabilizes the binding of IF-2 and IF-3 on the 30S subunit to which N-formylmethionyl-tRNA(fMet) subsequently binds. Helps modulate mRNA selection, yielding the 30S pre-initiation complex (PIC). Upon addition of the 50S ribosomal subunit IF-1, IF-2 and IF-3 are released leaving the mature 70S translation initiation complex. The chain is Translation initiation factor IF-1, chloroplastic from Daucus carota (Wild carrot).